Consider the following 319-residue polypeptide: L-lactate dehydrogenase 2 (319 aa).

NAD(+)-binding positions include Val-16, Asp-37, Lys-42, Tyr-68, and 82 to 83 (GA). 2 residues coordinate substrate: Gln-85 and Arg-91. NAD(+) contacts are provided by residues Ser-104, 121–123 (AAN), and Ser-146. 123-126 (NPVD) provides a ligand contact to substrate. 151–154 (DSAR) contributes to the substrate binding site. The Proton acceptor role is filled by His-178. Tyr-222 is subject to Phosphotyrosine. Thr-231 contacts substrate.

Belongs to the LDH/MDH superfamily. LDH family. Homotetramer.

It localises to the cytoplasm. It carries out the reaction (S)-lactate + NAD(+) = pyruvate + NADH + H(+). It participates in fermentation; pyruvate fermentation to lactate; (S)-lactate from pyruvate: step 1/1. Its function is as follows. Catalyzes the conversion of lactate to pyruvate (Potential). Contributes to S.aureus growth during nitrosative stress in both aerobically and anaerobically cultured cells, despite playing a secondary role in this resistance mechanism. The polypeptide is L-lactate dehydrogenase 2 (Staphylococcus aureus (strain USA300)).